The chain runs to 434 residues: Putative F-box/FBD/LRR-repeat protein At1g16940 (434 aa).

In terms of domain architecture, F-box spans 10–66; that stretch reads HNIINQLPDSLLCEIFFNLPTEEVVKTSLICRRWRYVWQSLPGLDLVINGSKNYDKF. LRR repeat units follow at residues 72 to 99, 114 to 141, 164 to 189, 204 to 231, 252 to 277, and 306 to 331; these read FMFL…MMNN, RRYV…KLHR, INFV…TMDK, CLTN…KLNR, DVAY…TISF, and MAVG…VMGF. In terms of domain architecture, FBD spans 336-385; the sequence is WGINFSDVPQCVLSSLEFVEVKAREVADMKKLWSYFMENSTVLKKFTLCL.

The polypeptide is Putative F-box/FBD/LRR-repeat protein At1g16940 (Arabidopsis thaliana (Mouse-ear cress)).